The following is an 85-amino-acid chain: UPF0386 protein Atu1321 (85 aa).

The protein belongs to the UPF0386 family.

This chain is UPF0386 protein Atu1321, found in Agrobacterium fabrum (strain C58 / ATCC 33970) (Agrobacterium tumefaciens (strain C58)).